The primary structure comprises 306 residues: D-alanine--D-alanine ligase (306 aa).

The ATP-grasp domain maps to 101-300 (RIMLAAAGVP…FGELVTWMVE (200 aa)). ATP is bound at residue 128–182 (MPTPYVLKPNAGGSSVGVFIVREDQAHPPQELTREDWPHGENLLAEEFIPGLELT). Asp250, Glu267, and Asn269 together coordinate Mg(2+).

Belongs to the D-alanine--D-alanine ligase family. The cofactor is Mg(2+). Requires Mn(2+) as cofactor.

The protein localises to the cytoplasm. It catalyses the reaction 2 D-alanine + ATP = D-alanyl-D-alanine + ADP + phosphate + H(+). Its pathway is cell wall biogenesis; peptidoglycan biosynthesis. In terms of biological role, cell wall formation. The chain is D-alanine--D-alanine ligase from Xanthobacter autotrophicus (strain ATCC BAA-1158 / Py2).